Here is a 358-residue protein sequence, read N- to C-terminus: uncharacterized protein (358 aa).

Positions 70–88 are enriched in low complexity; it reads RPAATAGTTPATGASGSAR. Residues 70-93 form a disordered region; sequence RPAATAGTTPATGASGSARPTDAA. Residues 178–353 form the Macro domain; the sequence is PSTCRGDNVS…AFSAAIQAGE (176 aa).

This is an uncharacterized protein from Mycobacterium bovis (strain ATCC BAA-935 / AF2122/97).